Reading from the N-terminus, the 29-residue chain is Cyclotide cter-L (29 aa).

The cyclopeptide (His-Asp) cross-link spans 1–29 (HEPCGESCVFIPCITTVVGCSCKNKVCYD). 3 disulfide bridges follow: Cys-4/Cys-20, Cys-8/Cys-22, and Cys-13/Cys-27.

In terms of processing, contains 3 disulfide bonds. This is a cyclic peptide.

Functionally, probably participates in a plant defense mechanism. The chain is Cyclotide cter-L from Clitoria ternatea (Butterfly pea).